The following is a 411-amino-acid chain: Transforming growth factor beta regulator 1 (411 aa).

Disordered stretches follow at residues 1 to 29 and 119 to 146; these read MSLL…PKKS and GPIS…KGKE. The residue at position 2 (Ser2) is an N-acetylserine. Phosphoserine is present on Ser10. The FYR N-terminal domain maps to 182–241; the sequence is VFPIGLGGLTVYSLGEIITDRPGFHDESAIYPVGYCSTRIYASMKCPDQKCLYTCQIKDG. In terms of domain architecture, FYR C-terminal spans 242 to 321; that stretch reads GVQPQFEIVP…RKCINYQWVK (80 aa).

The protein belongs to the TBRG1 family. Interacts with CDKN2A and MDM2. Ubiquitinated; mediated by MDM2 and leading to its subsequent proteasomal degradation. As to expression, widely expressed at low levels in most tissues, with highest levels in pancreas, lung and liver. Expression is decreased in primary tumors including lung, liver, breast, pancreas and kidney carcinomas, chronic lymphocytic leukemia and diffuse large B-cell lymphoma.

It localises to the nucleus. Functionally, acts as a growth inhibitor. Can activate p53/TP53, causes G1 arrest and collaborates with CDKN2A to restrict proliferation, but does not require either protein to inhibit DNA synthesis. Redistributes CDKN2A into the nucleoplasm. Involved in maintaining chromosomal stability. This is Transforming growth factor beta regulator 1 (TBRG1) from Homo sapiens (Human).